The chain runs to 240 residues: 1-(5-phosphoribosyl)-5-[(5-phosphoribosylamino)methylideneamino] imidazole-4-carboxamide isomerase (240 aa).

The active-site Proton acceptor is Asp-8. Catalysis depends on Asp-129, which acts as the Proton donor.

Belongs to the HisA/HisF family.

Its subcellular location is the cytoplasm. The enzyme catalyses 1-(5-phospho-beta-D-ribosyl)-5-[(5-phospho-beta-D-ribosylamino)methylideneamino]imidazole-4-carboxamide = 5-[(5-phospho-1-deoxy-D-ribulos-1-ylimino)methylamino]-1-(5-phospho-beta-D-ribosyl)imidazole-4-carboxamide. The protein operates within amino-acid biosynthesis; L-histidine biosynthesis; L-histidine from 5-phospho-alpha-D-ribose 1-diphosphate: step 4/9. This Caldanaerobacter subterraneus subsp. tengcongensis (strain DSM 15242 / JCM 11007 / NBRC 100824 / MB4) (Thermoanaerobacter tengcongensis) protein is 1-(5-phosphoribosyl)-5-[(5-phosphoribosylamino)methylideneamino] imidazole-4-carboxamide isomerase.